Consider the following 522-residue polypeptide: L-tyrosine/L-DOPA decarboxylase 2 (522 aa).

A run of 2 repeats spans residues 75–132 (KDVH…TELE) and 135–186 (VMDW…GREH). Residues 75-186 (KDVHDDIVPG…RILDRIGREH (112 aa)) are 2 X approximate tandem repeats. Residues threonine 163, cysteine 164, threonine 258, and asparagine 312 each coordinate pyridoxal 5'-phosphate. An N6-(pyridoxal phosphate)lysine modification is found at lysine 315.

This sequence belongs to the group II decarboxylase family. Pyridoxal 5'-phosphate is required as a cofactor. In terms of tissue distribution, strongly expressed in all tissues, particularly in thick roots.

It carries out the reaction L-tyrosine + H(+) = tyramine + CO2. It catalyses the reaction L-dopa + H(+) = dopamine + CO2. It functions in the pathway aromatic compound metabolism. It participates in alkaloid biosynthesis. In terms of biological role, aromatic amino acid decarboxylase participating in the biosynthesis of natural products derived from phenylethylamine, including mescaline, a natural hallucinogen potentially used in psychotherapeutic treatments. Catalyzes the decarboxylation of L-tyrosine and L-DOPA. The sequence is that of L-tyrosine/L-DOPA decarboxylase 2 from Lophophora williamsii (Peyote).